Reading from the N-terminus, the 333-residue chain is NADH-quinone oxidoreductase subunit H (333 aa).

Helical transmembrane passes span 15–35, 88–108, 117–137, 165–185, 191–211, 241–261, 274–294, and 313–333; these read IALF…FVTY, YVLA…VLPF, IGVG…GVVA, LVMS…VDIV, VWFI…AVAE, FFML…TILF, IPGA…LIWF, and VLLP…AWFF.

Belongs to the complex I subunit 1 family. As to quaternary structure, NDH-1 is composed of 14 different subunits. Subunits NuoA, H, J, K, L, M, N constitute the membrane sector of the complex.

The protein localises to the cell membrane. The catalysed reaction is a quinone + NADH + 5 H(+)(in) = a quinol + NAD(+) + 4 H(+)(out). In terms of biological role, NDH-1 shuttles electrons from NADH, via FMN and iron-sulfur (Fe-S) centers, to quinones in the respiratory chain. The immediate electron acceptor for the enzyme in this species is believed to be ubiquinone. Couples the redox reaction to proton translocation (for every two electrons transferred, four hydrogen ions are translocated across the cytoplasmic membrane), and thus conserves the redox energy in a proton gradient. This subunit may bind ubiquinone. This is NADH-quinone oxidoreductase subunit H from Geobacillus kaustophilus (strain HTA426).